We begin with the raw amino-acid sequence, 988 residues long: Band 4.1-like protein 2 (988 aa).

Positions 1 to 190 (MTTEVGSASE…GAAKRETKEV (190 aa)) are disordered. An N-acetylthreonine modification is found at Thr2. Ser7 carries the phosphoserine modification. A compositionally biased stretch (basic and acidic residues) spans 22–31 (ASKEKAKEVE). Ser38, Ser86, and Ser116 each carry phosphoserine. Composition is skewed to basic and acidic residues over residues 110–148 (ILGK…EAKP) and 160–190 (EEVR…TKEV). Ser201, Ser379, Ser395, Ser492, Ser543, Ser555, Ser561, and Ser582 each carry phosphoserine. The region spanning 211–492 (VLAKVTLLDG…EHHTFYRLVS (282 aa)) is the FERM domain. The interval 495-651 (QPPKTKFLTL…TPEPRPSEWE (157 aa)) is hydrophilic. The segment at 514-594 (TQAQTREAST…KATPLPAEGK (81 aa)) is disordered. Low complexity predominate over residues 555–567 (SPPGEGSVPGPGV). Tyr606 carries the phosphotyrosine modification. Residues Ser610 and Ser630 each carry the phosphoserine modification. 2 disordered regions span residues 639–788 (MAST…QAGA) and 804–839 (QKLP…VPHL). The interval 652–837 (KRRVTPLPFQ…DPHRVNGEVP (186 aa)) is spectrin--actin-binding. Over residues 673–686 (VEEKKRAEVGKDES) the composition is skewed to basic and acidic residues. Position 698 is a phosphoserine (Ser698). Residues 704 to 717 (GETRKVEPVAHKDS) show a composition bias toward basic and acidic residues. A compositionally biased stretch (low complexity) spans 718–729 (TSLSSESSSSSS). Basic and acidic residues predominate over residues 739–751 (QPHHRVTEGTIRE). Residue Thr745 is modified to Phosphothreonine. A compositionally biased stretch (acidic residues) spans 752–764 (EQEECDEELEEEP). The segment covering 828-839 (DPHRVNGEVPHL) has biased composition (basic and acidic residues). A C-terminal (CTD) region spans residues 838–988 (HLDLDGLPEI…ETELAEEGEE (151 aa)).

As to quaternary structure, interacts with FCGR1A. Interacts with TRPC4. Interacts (via CTD domain) with FKBP2. Interacts with NUMA1; this interaction is negatively regulated by CDK1 during metaphase and promotes anaphase-specific localization of NUMA1 in symmetrically dividing cells. Widely expressed.

The protein localises to the cytoplasm. It localises to the cytoskeleton. The protein resides in the cell cortex. It is found in the cell membrane. Functionally, required for dynein-dynactin complex and NUMA1 recruitment at the mitotic cell cortex during anaphase. This Mus musculus (Mouse) protein is Band 4.1-like protein 2.